A 370-amino-acid chain; its full sequence is Ubiquitin carboxyl-terminal hydrolase 12 (370 aa).

The Required for plasma membrane localization of USP12/WDR20 motif lies at 1–4; it reads MEIL. Residues 39 to 369 form the USP domain; that stretch reads FGLVNFGNTC…SGYILFYQSR (331 aa). Catalysis depends on Cys48, which acts as the Nucleophile. Residues 146-157 show a composition bias toward basic and acidic residues; it reads QEKQNGRLRNGD. Positions 146–168 are disordered; the sequence is QEKQNGRLRNGDVDNEDNNSTPD. Zn(2+)-binding residues include Cys186, Cys189, Cys233, and Cys236. The Proton acceptor role is filled by His317.

The protein belongs to the peptidase C19 family. USP12/USP46 subfamily. Interacts with WDR48. Interacts with WDR20; this interaction promotes translocation of the USP12 complex to the plasma membrane. Component of the USP12/WDR20/WDR48 deubiquitinating complex. Component of the USP12/DMWD/WDR48 deubiquitinating complex. Interacts with PHLPP1. Interacts with RBPJ. Interacts with CBP; this interaction blocks the acetyltransferase activity of CREBBP.

The protein resides in the nucleus. Its subcellular location is the cytoplasm. The protein localises to the cell membrane. It catalyses the reaction Thiol-dependent hydrolysis of ester, thioester, amide, peptide and isopeptide bonds formed by the C-terminal Gly of ubiquitin (a 76-residue protein attached to proteins as an intracellular targeting signal).. Activated by interaction with WDR20; WDR48 and DMWD through different allosteric mechanisms. Deubiquitinating enzyme that plays various roles in the regulation of the immune response and inflammation. During TCR engagement and activation, translocates into the cytoplasm and deubiquitinates its substrates LAT and TRAT1 and prevents their lysosome-dependent degradation to stabilize the TCR signaling complex at the plasma membrane. Plays an essential role in the selective LPS-induced macrophage response through the activation of NF-kappa-B pathway. In addition, promotes that antiviral immune response through targeting DNA sensor IFI16 to inhibit its proteasome-dependent degradation. Participates in the interferon signaling pathway and antiviral response independently of its deubiquitinase activity by maintaining nuclear phosphorylated STAT1 levels via inhibition of its CREBBP-mediated acetylation and subsequent dephosphorylation. Plays an intrinsic role in promoting the differentiation, activation and proliferation of CD4(+) T-cell by activating the NF-kappa-B signaling pathway through deubiquitinating and stabilizing B-cell lymphoma/leukemia 10/BCL10. In myeloid-derived suppressor cells promotes the activation of the NF-kappa-B via deubiquitination and stabilization of RELA. Regulates the 'Lys-63'-linked polyubiquitin chains of BAX and thereby modulates the mitochondrial apoptotic process. Negative regulator of NOTCH signaling that specifically deubiquitinates non-activated NOTCH receptors to target them for lysosomal degradation; deubiquitination of NOTCH stimulates its transport form late endosomes to lysosomes. Protects neurons against HTT/huntingtin-induced polyglutamine expansion-dependent neurodegeneration through regulation of autophagic flux. This function is independent of deubiquitinase activity or of other components of the USP12-WDR20-WDR48 deubiquitinating complex. In complex with WDR48, acts as a potential tumor suppressor by positively regulating PHLPP1 stability. The sequence is that of Ubiquitin carboxyl-terminal hydrolase 12 (Usp12) from Mus musculus (Mouse).